A 186-amino-acid chain; its full sequence is uncharacterized protein (186 aa).

Residues 1-21 (MIHVKYIILGFIMVSSLNLYA) form the signal peptide.

This is an uncharacterized protein from Rickettsia conorii (strain ATCC VR-613 / Malish 7).